Here is a 570-residue protein sequence, read N- to C-terminus: MNHFRKMEVINLTTLPMIPVDEHLAVSLVARNTMVKTVRKELENNPPSCLIGSMHQVNQKIADINLRTEPSANSLAIERFELEKKALREKTRSSPEDKVKRQRKSQYSCKGSELRHARSSVIKRKTADKNLLAELYQYSNFNSSKPNKLPNGVDFCDMVGNVVRAERDCLSGKHFCSGRELEKFLSSSSPRAIWLDSFWWIFHERYQPNKELQNNLFDRIAQHYALLLFRVPKSHSEEALLKRLPSLLSKAVYTSFCCCFPQSWFDTHEFKSDICNTMSLWISGTYPSPQSYDSWDYSELDPERFRREELMLYRRRLTKGREFSLFAGKRAFSQKPAQSRKFYHPQSSSANSPSEKTSSAKQNSEKSLRMQNTAKEHHCQTLVLKKPTQEVKRISEARECENMFPKKSCAACKSPELTSNLFNIYGKSPLIVYFLQNYASLQQHGKNVLIVRREKTTSTPDCTPTYTDVISETLCSMKKRKDNLNQLYQHHWTEWNYFDKHLKELQDNFSREMKNIDPKAADTKKANHMFIPPSAVNEESPDKKTKEGKGGEGKRRETEVEHFFPLTSKP.

A compositionally biased stretch (basic and acidic residues) spans 87–99 (LREKTRSSPEDKV). 3 disordered regions span residues 87-112 (LREK…CKGS), 336-374 (PAQS…QNTA), and 519-570 (KAAD…TSKP). The residue at position 343 (Tyr343) is a Phosphotyrosine. Residues 345 to 362 (PQSSSANSPSEKTSSAKQ) are compositionally biased toward polar residues. Phosphoserine occurs at positions 348 and 349. Basic and acidic residues-rich tracts occupy residues 363–374 (NSEKSLRMQNTA) and 540–562 (SPDK…EVEH).

Belongs to the FAM227 family.

In Homo sapiens (Human), this protein is Protein FAM227A (FAM227A).